The sequence spans 246 residues: tRNA (guanine-N(1)-)-methyltransferase (246 aa).

S-adenosyl-L-methionine contacts are provided by residues Gly-114 and 134-139 (IGDYIL). Over residues 219 to 231 (LRRPDLWERHEGA) the composition is skewed to basic and acidic residues. The segment at 219 to 246 (LRRPDLWERHEGARAQSPSGARRQKKER) is disordered.

This sequence belongs to the RNA methyltransferase TrmD family. In terms of assembly, homodimer.

The protein localises to the cytoplasm. The catalysed reaction is guanosine(37) in tRNA + S-adenosyl-L-methionine = N(1)-methylguanosine(37) in tRNA + S-adenosyl-L-homocysteine + H(+). Specifically methylates guanosine-37 in various tRNAs. The sequence is that of tRNA (guanine-N(1)-)-methyltransferase from Rhizorhabdus wittichii (strain DSM 6014 / CCUG 31198 / JCM 15750 / NBRC 105917 / EY 4224 / RW1) (Sphingomonas wittichii).